Consider the following 150-residue polypeptide: Nucleoside diphosphate kinase (150 aa).

Positions 9, 57, 85, 91, 102, and 112 each coordinate ATP. His-115 serves as the catalytic Pros-phosphohistidine intermediate.

This sequence belongs to the NDK family. It depends on Mg(2+) as a cofactor.

The protein resides in the cytoplasm. The enzyme catalyses a 2'-deoxyribonucleoside 5'-diphosphate + ATP = a 2'-deoxyribonucleoside 5'-triphosphate + ADP. It carries out the reaction a ribonucleoside 5'-diphosphate + ATP = a ribonucleoside 5'-triphosphate + ADP. In terms of biological role, major role in the synthesis of nucleoside triphosphates other than ATP. The ATP gamma phosphate is transferred to the NDP beta phosphate via a ping-pong mechanism, using a phosphorylated active-site intermediate. This Methanoregula boonei (strain DSM 21154 / JCM 14090 / 6A8) protein is Nucleoside diphosphate kinase.